We begin with the raw amino-acid sequence, 392 residues long: NSSLQVSNKGFSEFSGLRTSSAIPFGRKTNDDLLSVVAFQTSVIGGGNSKRGVVEAKLKVAINGFGRIGRNFLRCWHGRKDSPLDVIAINDTGGVKQASHLLKYDSTLGIFDADVKPVGTDGISVDGKVIQVVSDRNPVNLPWGDLGIDLVIEGTGVFVDREGAGKHIQAGAKKVLITAPGKGDIPTYVVGVNADLYNPDEPIISNASCTTNCLAPFVKVLDQKFGIIKGTMTTTHSYTGDQRLLDASHRDLRRARAAALNIVPTSTGAAKAVALSSQALRGSSMALPLRVPTPNVSVVDLVVQVSKKTFAEEVNAAFREAADKELKGILDVCDEPLVSVDFRCSDVSSTVDASLTMVMGDDMVKVIAWYDNEWGYSQRVVDLADIVANQWK.

The N-terminal 56 residues, 1-56 (NSSLQVSNKGFSEFSGLRTSSAIPFGRKTNDDLLSVVAFQTSVIGGGNSKRGVVEA), are a transit peptide targeting the chloroplast. NADP(+) contacts are provided by residues 67 to 68 (RI), aspartate 91, and arginine 136. D-glyceraldehyde 3-phosphate is bound by residues 208-210 (SCT), threonine 239, arginine 254, 267-268 (TG), and arginine 290. The Nucleophile role is filled by cysteine 209. Asparagine 372 contributes to the NADP(+) binding site.

The protein belongs to the glyceraldehyde-3-phosphate dehydrogenase family. In terms of assembly, tetramer of either four A chains (GAPDH 2) or two A and two B chains (GAPDH 1).

The protein localises to the plastid. Its subcellular location is the chloroplast. The catalysed reaction is D-glyceraldehyde 3-phosphate + phosphate + NADP(+) = (2R)-3-phospho-glyceroyl phosphate + NADPH + H(+). It participates in carbohydrate biosynthesis; Calvin cycle. The protein is Glyceraldehyde-3-phosphate dehydrogenase A, chloroplastic (GAPA) of Nicotiana tabacum (Common tobacco).